Here is a 722-residue protein sequence, read N- to C-terminus: Zinc finger BED domain-containing protein RICESLEEPER 2 (722 aa).

Residues 66–134 (RKKSLVWEHF…QEHKLALTPA (69 aa)) form a BED-type zinc finger. Positions 89, 92, 113, and 127 each coordinate Zn(2+). Residues 572-592 (VEQGDGNNAPASENGTQATAP) form a disordered region. The span at 576–592 (DGNNAPASENGTQATAP) shows a compositional bias: polar residues. The interval 617 to 702 (ELEQYLDESL…EALVCAKDWL (86 aa)) is HATC (Hobo-Ac-Tam3) domain.

As to quaternary structure, homodimer.

It is found in the nucleus. Its function is as follows. Transposase-like protein that is essential for plant growth and development. May regulate global gene expression by recruiting other cellular factors. The polypeptide is Zinc finger BED domain-containing protein RICESLEEPER 2 (Oryza sativa subsp. japonica (Rice)).